The chain runs to 242 residues: Ubiquinone biosynthesis O-methyltransferase (242 aa).

Residues Arg44, Gly64, Asp85, and Met129 each contribute to the S-adenosyl-L-methionine site.

Belongs to the methyltransferase superfamily. UbiG/COQ3 family.

It catalyses the reaction a 3-demethylubiquinol + S-adenosyl-L-methionine = a ubiquinol + S-adenosyl-L-homocysteine + H(+). It carries out the reaction a 3-(all-trans-polyprenyl)benzene-1,2-diol + S-adenosyl-L-methionine = a 2-methoxy-6-(all-trans-polyprenyl)phenol + S-adenosyl-L-homocysteine + H(+). Its pathway is cofactor biosynthesis; ubiquinone biosynthesis. In terms of biological role, O-methyltransferase that catalyzes the 2 O-methylation steps in the ubiquinone biosynthetic pathway. This Salmonella agona (strain SL483) protein is Ubiquinone biosynthesis O-methyltransferase.